A 471-amino-acid polypeptide reads, in one-letter code: Phosphoglycerate kinase (471 aa).

Substrate-binding positions include aspartate 24–asparagine 26, arginine 41, histidine 64–arginine 67, arginine 127, and arginine 169. ATP contacts are provided by residues lysine 220, glycine 307, glutamate 338, and glycine 368–serine 371. Residues lysine 417 to lysine 471 are disordered. Residues threonine 439–lysine 455 show a composition bias toward low complexity.

Belongs to the phosphoglycerate kinase family. Monomer.

The protein localises to the cytoplasm. The catalysed reaction is (2R)-3-phosphoglycerate + ATP = (2R)-3-phospho-glyceroyl phosphate + ADP. It participates in carbohydrate degradation; glycolysis; pyruvate from D-glyceraldehyde 3-phosphate: step 2/5. This Malacoplasma penetrans (strain HF-2) (Mycoplasma penetrans) protein is Phosphoglycerate kinase.